The sequence spans 270 residues: Cyclohexanol dehydrogenase (270 aa).

Arginine 19, aspartate 40, aspartate 78, valine 79, asparagine 105, tyrosine 176, lysine 180, isoleucine 209, and threonine 211 together coordinate NAD(+). The active-site Proton acceptor is tyrosine 176.

This sequence belongs to the short-chain dehydrogenases/reductases (SDR) family. In terms of assembly, homodimer.

Its subcellular location is the cytoplasm. It carries out the reaction cyclohexanol + NAD(+) = cyclohexanone + NADH + H(+). Its activity is regulated as follows. Activity is enhanced by the addition of Ba(2+) and Mg(2+), but inhibited by the addition of Al(3+), Ca(2+), Co(2+), Cu(2+), Mn(2+) and Zn(2+). Catalyzes the oxidation of cyclohexanol to cyclohexanone. Can also use a broad range of other alcohols, including trans-cyclohexane-1,2-diol, trans-cyclopentane-1,2-diol, cyclopentanol, hexane-1,2-diol, ethanol, 1-propanol, 1-butanol, 1-pentanol and 1-hexanol. The protein is Cyclohexanol dehydrogenase of Rhodococcus sp. (strain TK6).